The primary structure comprises 1163 residues: Type IV pilus biogenesis factor PilY1 (1163 aa).

The N-terminal stretch at 1–30 (MKSALHQIGKTSLAAALSGAVLLSAQTTHA) is a signal peptide. Positions 329–352 (SVGNADSTSRSLPDGKSYSSQTPY) are disordered. Residues Asp-600, Asp-602, Asn-604, and Asp-608 each coordinate Ca(2+). The tract at residues 619–621 (RGD) is integrin-binding motif RGD. Ca(2+) contacts are provided by Asp-851, Asn-853, Asp-855, Val-857, and Asp-859. The segment at 1138 to 1163 (SGECLTVNPGPNTRGRQNWRPIEGKN) is disordered.

It belongs to the PilY1 family. In terms of assembly, interacts (via C-terminal 532-1163) with host integrins alpha-V/beta-3 (ITGAV/ITGB3) and alpha-V/beta-5 (ITGAV/ITGB5).

Its subcellular location is the fimbrium. The protein localises to the membrane. The protein resides in the cytoplasm. It localises to the cytosol. In terms of biological role, involved in pilus assembly, twitching motility and adhesion to host cells. Primes type IV pili (T4P) assembly and is required for inclusion of minor pilins PilV, PilW and PilX to the surface pili. Stabilizes assembled pilus fibers likely by antagonizing retraction mediated by PilT. Calcium-binding and calcium release by PilY1 seem to be essential for twitching motility and for regulation of pilus retraction dynamics of PilT. Adhesin for human tissue specifically recognizing a host receptor localized or enriched on basolateral epithelial cell surfaces. Binds host integrins in an calcium-dependent manner in vitro and this interaction may be employed by the bacterium to mediate host epithelial cell binding in vivo. This Pseudomonas aeruginosa (strain PAK) protein is Type IV pilus biogenesis factor PilY1.